We begin with the raw amino-acid sequence, 182 residues long: UPF0397 protein SPG_0438 (182 aa).

The next 5 helical transmembrane spans lie at 10 to 30 (VVAV…NIPT), 46 to 66 (LLSI…GHAI), 73 to 93 (YGLW…VGLF), 109 to 129 (ILIF…VLAP), and 148 to 168 (IVAG…LLLA).

It belongs to the UPF0397 family.

It is found in the cell membrane. The sequence is that of UPF0397 protein SPG_0438 from Streptococcus pneumoniae serotype 19F (strain G54).